Here is a 512-residue protein sequence, read N- to C-terminus: rRNA N(6)-adenosine-methyltransferase ZCCHC4 (512 aa).

Zn(2+)-binding residues include Cys39, His41, Cys63, Cys72, Cys124, Cys127, His139, and His142. The GRF-type zinc-finger motif lies at 39-81; sequence CPHGPTLLFVKVNQGKEETRKFYACSACRDRKDCNFFQWEDEK. Residues 171–174, Arg201, Asp223, 241–242, and Asp274 each bind S-adenosyl-L-methionine; these read QYLF and NM. The interval 335–355 is regulatory loop; it reads QVDYDNHALYKHGKTGRKQSP. Zn(2+) contacts are provided by Cys378, Cys381, His391, Cys392, Cys395, Cys398, His408, Cys409, Cys412, Cys415, His422, Cys423, Cys426, Cys429, His434, and Cys436. Positions 393–445 constitute a DHHC domain; sequence VHCNSCTSKDGRKWSHCFLCKKCVKPSWIHCNTCNRCALPDHSCLGPKDGCFI. The segment at 441–458 adopts a CCHC-type zinc-finger fold; the sequence is DGCFICGALDHKRSNCPN.

This sequence belongs to the ZCCHC4 family. As to quaternary structure, interacts with components of the ASC-1 complex TRIP4, ASCC1, ASCC2 and ASCC3. Interact with AHCYL1 and AHCYL2. Interact with YTHDC2.

The protein resides in the cytoplasm. It is found in the nucleus. The protein localises to the nucleolus. The enzyme catalyses adenosine(4220) in 28S rRNA + S-adenosyl-L-methionine = N(6)-methyladenosine(4220) in 28S rRNA + S-adenosyl-L-homocysteine + H(+). RRNA N6-methyltransferase that specifically methylates the adenine in position 4220 of 28S rRNA. N6-methylation of adenine(4220) in 28S rRNA is required for translation. The chain is rRNA N(6)-adenosine-methyltransferase ZCCHC4 from Mus musculus (Mouse).